A 61-amino-acid chain; its full sequence is Overexpressed in colon carcinoma 1 protein homolog (61 aa).

Residues 1–13 show a composition bias toward polar residues; that stretch reads MGCGNSTAASTTP. A disordered region spans residues 1–61; sequence MGCGNSTAAS…AGQTASTHKE (61 aa). Residues 18-34 are compositionally biased toward basic and acidic residues; that stretch reads SAKDVQDDSSMDEEKRR. Residues 48–61 are compositionally biased toward polar residues; that stretch reads TNETAGQTASTHKE.

The protein belongs to the OCC1 family.

The sequence is that of Overexpressed in colon carcinoma 1 protein homolog (si:dkey-261e22.4) from Danio rerio (Zebrafish).